The chain runs to 299 residues: Nucleotide-binding protein Moth_0258 (299 aa).

An ATP-binding site is contributed by 14–21; it reads GLSGAGKT. Residue 68 to 71 coordinates GTP; the sequence is DIRG.

It belongs to the RapZ-like family.

Functionally, displays ATPase and GTPase activities. In Moorella thermoacetica (strain ATCC 39073 / JCM 9320), this protein is Nucleotide-binding protein Moth_0258.